We begin with the raw amino-acid sequence, 72 residues long: Small ribosomal subunit protein eS17 (72 aa).

It belongs to the eukaryotic ribosomal protein eS17 family.

The sequence is that of Small ribosomal subunit protein eS17 from Nanoarchaeum equitans (strain Kin4-M).